Here is a 328-residue protein sequence, read N- to C-terminus: Probable membrane-associated kinase regulator 4 (328 aa).

The interval 213–253 is disordered; it reads GQIKTERPKKQSNGSVSGSHRRSFSVSMRRQAAKSSNNKSS. Positions 223-240 are enriched in polar residues; sequence QSNGSVSGSHRRSFSVSM.

The protein localises to the cell membrane. This Arabidopsis thaliana (Mouse-ear cress) protein is Probable membrane-associated kinase regulator 4 (MAKR4).